We begin with the raw amino-acid sequence, 137 residues long: MTPLVVLAVAIAGGLGAVARLVLDGVLRSRAPVSFPLGTTAINVTGSFVLGLVTALALGHGLPPEWRAILGTGFIGGYTTFSTASYEAVRLAQQRQYRAALLTGVGMMFLALGAAGLGLWLGGLAVAPTPPAPSTTL.

4 consecutive transmembrane segments (helical) span residues 3–23 (PLVVLAVAIAGGLGAVARLVL), 42–62 (INVTGSFVLGLVTALALGHGL), 69–89 (ILGTGFIGGYTTFSTASYEAV), and 107–127 (MMFLALGAAGLGLWLGGLAVA). Glycine 76 and threonine 79 together coordinate Na(+).

Belongs to the fluoride channel Fluc/FEX (TC 1.A.43) family.

It localises to the cell membrane. It catalyses the reaction fluoride(in) = fluoride(out). Its activity is regulated as follows. Na(+) is not transported, but it plays an essential structural role and its presence is essential for fluoride channel function. Functionally, fluoride-specific ion channel. Important for reducing fluoride concentration in the cell, thus reducing its toxicity. This Leifsonia xyli subsp. xyli (strain CTCB07) protein is Fluoride-specific ion channel FluC 1.